Reading from the N-terminus, the 338-residue chain is Anthranilate phosphoribosyltransferase (338 aa).

5-phospho-alpha-D-ribose 1-diphosphate-binding positions include G80, 83–84 (GD), T88, 90–93 (NIST), 108–116 (KHGNRAVSS), and S120. Position 80 (G80) interacts with anthranilate. A Mg(2+)-binding site is contributed by S92. Residue N111 coordinates anthranilate. R166 contacts anthranilate. Mg(2+)-binding residues include D225 and E226.

It belongs to the anthranilate phosphoribosyltransferase family. In terms of assembly, homodimer. The cofactor is Mg(2+).

It catalyses the reaction N-(5-phospho-beta-D-ribosyl)anthranilate + diphosphate = 5-phospho-alpha-D-ribose 1-diphosphate + anthranilate. The protein operates within amino-acid biosynthesis; L-tryptophan biosynthesis; L-tryptophan from chorismate: step 2/5. Its function is as follows. Catalyzes the transfer of the phosphoribosyl group of 5-phosphorylribose-1-pyrophosphate (PRPP) to anthranilate to yield N-(5'-phosphoribosyl)-anthranilate (PRA). The chain is Anthranilate phosphoribosyltransferase from Thermoanaerobacter sp. (strain X514).